Here is a 283-residue protein sequence, read N- to C-terminus: Digeranylgeranylglyceryl phosphate synthase (283 aa).

The next 8 membrane-spanning stretches (helical) occupy residues 21 to 41 (ITASIGGIIGYLISSNFEIDI), 45 to 65 (LLVFFVVFFVCAYGNVINDIF), 97 to 117 (LILGLVLSLFINIYALIIAVI), 135 to 155 (IGNFIIGYLTGSVFLFGGVAG), 158 to 178 (VMPVVILFLCSLLSIWGREIV), 204 to 224 (LYFATFLVVLAVILSPLPYIL), 226 to 246 (IFGIWYLILIAICDILFIYAM), and 261 to 281 (VSKFLKIIMNIVLLAFIVGAI).

The protein belongs to the UbiA prenyltransferase family. DGGGP synthase subfamily. Mg(2+) serves as cofactor.

The protein resides in the cell membrane. The enzyme catalyses sn-3-O-(geranylgeranyl)glycerol 1-phosphate + (2E,6E,10E)-geranylgeranyl diphosphate = 2,3-bis-O-(geranylgeranyl)-sn-glycerol 1-phosphate + diphosphate. The protein operates within membrane lipid metabolism; glycerophospholipid metabolism. In terms of biological role, prenyltransferase that catalyzes the transfer of the geranylgeranyl moiety of geranylgeranyl diphosphate (GGPP) to the C2 hydroxyl of (S)-3-O-geranylgeranylglyceryl phosphate (GGGP). This reaction is the second ether-bond-formation step in the biosynthesis of archaeal membrane lipids. In Methanocaldococcus jannaschii (strain ATCC 43067 / DSM 2661 / JAL-1 / JCM 10045 / NBRC 100440) (Methanococcus jannaschii), this protein is Digeranylgeranylglyceryl phosphate synthase.